Reading from the N-terminus, the 206-residue chain is Imidazoleglycerol-phosphate dehydratase (206 aa).

The protein belongs to the imidazoleglycerol-phosphate dehydratase family.

It localises to the cytoplasm. It catalyses the reaction D-erythro-1-(imidazol-4-yl)glycerol 3-phosphate = 3-(imidazol-4-yl)-2-oxopropyl phosphate + H2O. Its pathway is amino-acid biosynthesis; L-histidine biosynthesis; L-histidine from 5-phospho-alpha-D-ribose 1-diphosphate: step 6/9. This Leptospira interrogans serogroup Icterohaemorrhagiae serovar copenhageni (strain Fiocruz L1-130) protein is Imidazoleglycerol-phosphate dehydratase.